Consider the following 126-residue polypeptide: Small ribosomal subunit protein uS13 (126 aa).

Positions 95 to 126 are disordered; sequence GLPVRGQRTHTNARTRKGPRKTVAGKKKPGKK.

The protein belongs to the universal ribosomal protein uS13 family. In terms of assembly, part of the 30S ribosomal subunit. Forms a loose heterodimer with protein S19. Forms two bridges to the 50S subunit in the 70S ribosome.

Located at the top of the head of the 30S subunit, it contacts several helices of the 16S rRNA. In the 70S ribosome it contacts the 23S rRNA (bridge B1a) and protein L5 of the 50S subunit (bridge B1b), connecting the 2 subunits; these bridges are implicated in subunit movement. Contacts the tRNAs in the A and P-sites. The protein is Small ribosomal subunit protein uS13 of Acidothermus cellulolyticus (strain ATCC 43068 / DSM 8971 / 11B).